We begin with the raw amino-acid sequence, 391 residues long: ATP phosphoribosyltransferase regulatory subunit (391 aa).

This sequence belongs to the class-II aminoacyl-tRNA synthetase family. HisZ subfamily. As to quaternary structure, heteromultimer composed of HisG and HisZ subunits.

It is found in the cytoplasm. It functions in the pathway amino-acid biosynthesis; L-histidine biosynthesis; L-histidine from 5-phospho-alpha-D-ribose 1-diphosphate: step 1/9. Its function is as follows. Required for the first step of histidine biosynthesis. May allow the feedback regulation of ATP phosphoribosyltransferase activity by histidine. The chain is ATP phosphoribosyltransferase regulatory subunit from Clostridium kluyveri (strain ATCC 8527 / DSM 555 / NBRC 12016 / NCIMB 10680 / K1).